The chain runs to 285 residues: MRFVIVTGMSGAGKSSVLKMLEDSSYFCVDNLPIPFIMKFARLAVKESANITKVALGIDIRSGQALEELGKVLEDVKSAGYQYEILFLEASTEILVKRYKETRRMHPLSGTGRVDKGIELERRKLRFLKERADYIIDTSRLLVRELKTEIDNIFVQDGTYRNFFITVLSFGFKYGLPNDADLVFDVRFLQNPYYVPKLKSKTGNEPEVRDFVLSLEQAEEFLTKLMDMLLFLIPNYIAEGKNQLVIGIGCTGGRHRSVTLANEITKRLSATEYGVKAEHRDVEKG.

Residue 8-15 participates in ATP binding; it reads GMSGAGKS. 59 to 62 is a GTP binding site; it reads DIRS.

Belongs to the RapZ-like family.

Its function is as follows. Displays ATPase and GTPase activities. The chain is Nucleotide-binding protein Cphy_0331 from Lachnoclostridium phytofermentans (strain ATCC 700394 / DSM 18823 / ISDg) (Clostridium phytofermentans).